The chain runs to 178 residues: Major urinary protein 4 (178 aa).

A signal peptide spans 1-16 (MKLLLCLGLTLVCIHA). C80 and C173 form a disulfide bridge.

It belongs to the calycin superfamily. Lipocalin family. Expressed in lacrimal gland, parotid gland, sublingual gland, nasal mucus, and vomeronasal organ.

It is found in the secreted. Binds pheromones, likely to displace pheromones complexed to urinary MUPs and transport them to the vomeronasal organ (VNO) where they associate with their neuronal receptor(s). MUP4 is highly specific for the male mouse pheromone 2-sec-butyl-4,5-dihydrothiazole (SBT). The protein is Major urinary protein 4 (Mup4) of Mus musculus (Mouse).